Here is a 218-residue protein sequence, read N- to C-terminus: Thiopurine S-methyltransferase (218 aa).

S-adenosyl-L-methionine contacts are provided by Trp-10, Leu-45, Glu-66, and Arg-123.

Belongs to the class I-like SAM-binding methyltransferase superfamily. TPMT family.

The protein localises to the cytoplasm. It carries out the reaction S-adenosyl-L-methionine + a thiopurine = S-adenosyl-L-homocysteine + a thiopurine S-methylether.. The protein is Thiopurine S-methyltransferase of Shewanella baltica (strain OS223).